A 429-amino-acid chain; its full sequence is Saccharopine dehydrogenase-like oxidoreductase (429 aa).

Ala2 bears the N-acetylalanine mark. Position 217 is a phosphoserine (Ser217).

This sequence belongs to the saccharopine dehydrogenase family.

In Homo sapiens (Human), this protein is Saccharopine dehydrogenase-like oxidoreductase (SCCPDH).